Reading from the N-terminus, the 125-residue chain is Ribosome-binding factor A (125 aa).

This sequence belongs to the RbfA family. As to quaternary structure, monomer. Binds 30S ribosomal subunits, but not 50S ribosomal subunits or 70S ribosomes.

It is found in the cytoplasm. One of several proteins that assist in the late maturation steps of the functional core of the 30S ribosomal subunit. Associates with free 30S ribosomal subunits (but not with 30S subunits that are part of 70S ribosomes or polysomes). Required for efficient processing of 16S rRNA. May interact with the 5'-terminal helix region of 16S rRNA. The polypeptide is Ribosome-binding factor A (Xylella fastidiosa (strain 9a5c)).